The primary structure comprises 54 residues: Low temperature-induced protein lt101.2 (54 aa).

The next 2 membrane-spanning stretches (helical) occupy residues 2-22 and 34-54; these read ASATFIEVILAIILPPVGVFL and LLLTLLGYIPGIIYAVYVLVA.

Belongs to the UPF0057 (PMP3) family.

It is found in the membrane. This is Low temperature-induced protein lt101.2 (LT101.2) from Hordeum vulgare (Barley).